A 97-amino-acid chain; its full sequence is MEAVERIENPYGIRLRIFLQPKASRDQIVGLHDSELKIAITAPPVDGAANAHLLKYLSKLFKVPKSSIVLEKGELQRHKQLFVPEPKLIPKEIEALL.

This sequence belongs to the UPF0235 family.

This Actinobacillus pleuropneumoniae serotype 7 (strain AP76) protein is UPF0235 protein APP7_1431.